The chain runs to 256 residues: Large ribosomal subunit protein bL21c (256 aa).

The transit peptide at 1 to 55 (MASATLAFSCSSLCATLKLPQNLNPLLLNVPPLSKPFSGVVSPPSLSRLSLLPVA) directs the protein to the chloroplast.

As to quaternary structure, component of the chloroplast large ribosomal subunit (LSU). Mature 70S chloroplast ribosomes of higher plants consist of a small (30S) and a large (50S) subunit. The 30S small subunit contains 1 molecule of ribosomal RNA (16S rRNA) and 24 different proteins. The 50S large subunit contains 3 rRNA molecules (23S, 5S and 4.5S rRNA) and 33 different proteins.

It is found in the plastid. The protein localises to the chloroplast. Component of the chloroplast ribosome (chloro-ribosome), a dedicated translation machinery responsible for the synthesis of chloroplast genome-encoded proteins, including proteins of the transcription and translation machinery and components of the photosynthetic apparatus. This Spinacia oleracea (Spinach) protein is Large ribosomal subunit protein bL21c (RPL21).